The chain runs to 360 residues: D-alanine--D-alanine ligase (360 aa).

The 210-residue stretch at 134–343 folds into the ATP-grasp domain; it reads KILAQRVGVP…YTELITRLIQ (210 aa). Position 169–224 (169–224) interacts with ATP; that stretch reads AEKLGHDMFVKPSNQGSSVGVNHVTNAEEYAAALEEAFKYDDKVLVEETVPGTEVE. Residues Asp-297, Glu-310, and Asn-312 each coordinate Mg(2+).

It belongs to the D-alanine--D-alanine ligase family. It depends on Mg(2+) as a cofactor. Mn(2+) is required as a cofactor.

The protein localises to the cytoplasm. The enzyme catalyses 2 D-alanine + ATP = D-alanyl-D-alanine + ADP + phosphate + H(+). It participates in cell wall biogenesis; peptidoglycan biosynthesis. Its function is as follows. Cell wall formation. This is D-alanine--D-alanine ligase from Lactobacillus acidophilus (strain ATCC 700396 / NCK56 / N2 / NCFM).